The sequence spans 892 residues: UPF0182 protein Gura_0902 (892 aa).

A run of 7 helical transmembrane segments spans residues 6-26 (FIII…LINF), 50-70 (VGAG…NLHF), 103-123 (LGIL…AMQW), 158-178 (MLKI…GAVY), 201-221 (LAVL…LNGC), 248-268 (ILTV…WQGA), and 271-291 (LALL…KAYP).

The protein belongs to the UPF0182 family.

It is found in the cell membrane. The protein is UPF0182 protein Gura_0902 of Geotalea uraniireducens (strain Rf4) (Geobacter uraniireducens).